Consider the following 609-residue polypeptide: Phosphomethylpyrimidine synthase (609 aa).

Substrate-binding positions include N219, M248, Y277, H313, 333–335 (SRG), 374–377 (DGLR), and E413. H417 contacts Zn(2+). Y440 contacts substrate. Residue H481 participates in Zn(2+) binding. Residues C561, C564, and C569 each contribute to the [4Fe-4S] cluster site.

It belongs to the ThiC family. Requires [4Fe-4S] cluster as cofactor.

The catalysed reaction is 5-amino-1-(5-phospho-beta-D-ribosyl)imidazole + S-adenosyl-L-methionine = 4-amino-2-methyl-5-(phosphooxymethyl)pyrimidine + CO + 5'-deoxyadenosine + formate + L-methionine + 3 H(+). It functions in the pathway cofactor biosynthesis; thiamine diphosphate biosynthesis. Functionally, catalyzes the synthesis of the hydroxymethylpyrimidine phosphate (HMP-P) moiety of thiamine from aminoimidazole ribotide (AIR) in a radical S-adenosyl-L-methionine (SAM)-dependent reaction. The protein is Phosphomethylpyrimidine synthase of Deinococcus geothermalis (strain DSM 11300 / CIP 105573 / AG-3a).